We begin with the raw amino-acid sequence, 388 residues long: Succinate--CoA ligase [ADP-forming] subunit beta (388 aa).

An ATP-grasp domain is found at 9–244 (KQLFAEYGLP…PSQDDPREAH (236 aa)). ATP contacts are provided by residues lysine 46, 53-55 (GRG), glutamate 99, threonine 102, and glutamate 107. Asparagine 199 and aspartate 213 together coordinate Mg(2+). Substrate contacts are provided by residues asparagine 264 and 321–323 (GIV).

The protein belongs to the succinate/malate CoA ligase beta subunit family. As to quaternary structure, heterotetramer of two alpha and two beta subunits. Mg(2+) is required as a cofactor.

It catalyses the reaction succinate + ATP + CoA = succinyl-CoA + ADP + phosphate. It carries out the reaction GTP + succinate + CoA = succinyl-CoA + GDP + phosphate. It functions in the pathway carbohydrate metabolism; tricarboxylic acid cycle; succinate from succinyl-CoA (ligase route): step 1/1. In terms of biological role, succinyl-CoA synthetase functions in the citric acid cycle (TCA), coupling the hydrolysis of succinyl-CoA to the synthesis of either ATP or GTP and thus represents the only step of substrate-level phosphorylation in the TCA. The beta subunit provides nucleotide specificity of the enzyme and binds the substrate succinate, while the binding sites for coenzyme A and phosphate are found in the alpha subunit. The polypeptide is Succinate--CoA ligase [ADP-forming] subunit beta (Stutzerimonas stutzeri (strain A1501) (Pseudomonas stutzeri)).